Here is a 259-residue protein sequence, read N- to C-terminus: UPF0246 protein PputW619_0896 (259 aa).

It belongs to the UPF0246 family.

The polypeptide is UPF0246 protein PputW619_0896 (Pseudomonas putida (strain W619)).